A 97-amino-acid polypeptide reads, in one-letter code: UPF0235 protein APL_1380 (97 aa).

Belongs to the UPF0235 family.

This chain is UPF0235 protein APL_1380, found in Actinobacillus pleuropneumoniae serotype 5b (strain L20).